The following is a 259-amino-acid chain: 3-deoxy-manno-octulosonate cytidylyltransferase (259 aa).

The protein belongs to the KdsB family.

The protein localises to the cytoplasm. It catalyses the reaction 3-deoxy-alpha-D-manno-oct-2-ulosonate + CTP = CMP-3-deoxy-beta-D-manno-octulosonate + diphosphate. It functions in the pathway nucleotide-sugar biosynthesis; CMP-3-deoxy-D-manno-octulosonate biosynthesis; CMP-3-deoxy-D-manno-octulosonate from 3-deoxy-D-manno-octulosonate and CTP: step 1/1. Its pathway is bacterial outer membrane biogenesis; lipopolysaccharide biosynthesis. In terms of biological role, activates KDO (a required 8-carbon sugar) for incorporation into bacterial lipopolysaccharide in Gram-negative bacteria. This is 3-deoxy-manno-octulosonate cytidylyltransferase from Alkalilimnicola ehrlichii (strain ATCC BAA-1101 / DSM 17681 / MLHE-1).